The sequence spans 309 residues: Olfactory receptor 1A1 (309 aa).

The Extracellular portion of the chain corresponds to 1 to 25 (MRENNQSSTLEFILLGVTGQQEQED). A glycan (N-linked (GlcNAc...) asparagine) is linked at N5. The chain crosses the membrane as a helical span at residues 26-49 (FFYILFLFIYPITLIGNLLIVLAI). Residues 50–57 (CSDVHLHN) are Cytoplasmic-facing. A helical transmembrane segment spans residues 58-79 (PMYFLLANLSLVDIFFSSVTIP). Over 80–100 (KMLANHLSGSKSISFGGCLTQ) the chain is Extracellular. C97 and C189 are joined by a disulfide. The chain crosses the membrane as a helical span at residues 101–120 (MYFMIDLGNTDSYTLAAMAY). At 121-139 (DRAVAISRPLHYTTIMSPR) the chain is on the cytoplasmic side. The chain crosses the membrane as a helical span at residues 140–158 (SCIWLIAGSWVIGNANALP). Over 159-195 (HTLLTASLSFCGNQEVANFYCDITPLLKLSCSDIHFH) the chain is Extracellular. A helical transmembrane segment spans residues 196-218 (VKMMYLGVGIFSVPLLCIIVSYI). Residues 219–235 (RVFSTVFQVPSTKGVLK) are Cytoplasmic-facing. Residues 236–258 (AFSTCGSHLTVVSLYYGTVMGMY) traverse the membrane as a helical segment. The Extracellular portion of the chain corresponds to 259–270 (FRPLTNYSLKDA). N-linked (GlcNAc...) asparagine glycosylation is present at N264. Residues 271–290 (VITVMCTAVTPMLNPFIYSL) traverse the membrane as a helical segment. The Cytoplasmic portion of the chain corresponds to 291 to 309 (RNRDMKAALQKLFNKRISS).

The protein belongs to the G-protein coupled receptor 1 family.

The protein localises to the cell membrane. In terms of biological role, odorant receptor. This is Olfactory receptor 1A1 (OR1A1) from Gorilla gorilla gorilla (Western lowland gorilla).